Here is a 450-residue protein sequence, read N- to C-terminus: MQKNQIVDLEITDLSYEAMGVAHLDGMTVFVNNALPGEIVSAKLLKVKKNFAFAKIEKIKKESPDRINVKLRQWVQTGLASLAHIKYDKQLEFKRNQVVNLLHKADLDNVKVGQTMPSPEETGYRNKAQVPVREVNGKLDIGFFRKHSHDLVPLTSFFTTDPEIDRVLIKVRDILRKNHVPAYDEIHNKGEVRYLEVRRSKATGEIMVILVCLHKDFPQLKEVTKEISEIKGVTSVVLNHNPKKTNVILGKKDYLLWGEPQITDKIGDVSFKISPQSFFQINSLQTPRLYDLAIQKADLKPDDVVIDAYSGIGTIGLSVAKHVKAVRGMEVIEPAVEDANANAKLNGITNAEYVVGKAEEVMPRWAKEGLKTDVIFVDPPRKGLTPEFIDAAVETNPKKIVYISCNPATMVRDLQLFKEQGYDFDEIDPVDMFPQTPHVEAVAVLERTEK.

Residues 1–58 (MQKNQIVDLEITDLSYEAMGVAHLDGMTVFVNNALPGEIVSAKLLKVKKNFAFAKIEK) form the TRAM domain. 4 residues coordinate S-adenosyl-L-methionine: Q280, Y309, E330, and D378. The Nucleophile role is filled by C405.

Belongs to the class I-like SAM-binding methyltransferase superfamily. RNA M5U methyltransferase family.

This is an uncharacterized protein from Lactobacillus johnsonii (strain CNCM I-12250 / La1 / NCC 533).